The chain runs to 449 residues: MCDPQRDEELRPVPKERAVLESFFTQLGMFWFDRAKDYVEKEKDASKSAGAIWGSLLAALAHLAAAEKAYHNMTFLGQKLGGQSFFSRKDSIRTIYTSLHNELKKVVSMGRHAPGGSTPNLEELLPHLSEQLCHFTQARMEIADFYEKMHTLGSQKTVNSEELVGALDSILQKYSSRFHHPILSRLESSFQVEVDVLTQLLRCQAQISEWHFLPSLLNLHGAHSKLQAWGQVFERQRETRKHLFGGQSQKAVQPPHLFLWLQRLQATLLAKFSFYFHEALSRQTSQSEMKTLTARTSLDYFGKISGFIRKYDASNVSLVFDNRGSESFQGHGYHHPQSYREAPKGVDQFPAVVSLPGGERPVTHWPNVIMIMSDRSTELNTLDKVVHFYDDKVQSTYFLARPEPHFTIVVIFDGRKSERDSYIVAFLQELIGSLRNSKPFTSLKPGSKG.

It belongs to the KICS2 family. In terms of assembly, may be part of the KICSTOR complex.

Its subcellular location is the lysosome membrane. In terms of biological role, as part of the KICSTOR complex may function in the amino acid-sensing branch of the TORC1 signaling pathway. In Danio rerio (Zebrafish), this protein is KICSTOR subunit 2 (kics2).